The chain runs to 341 residues: D-aspartate oxidase (341 aa).

FAD-binding residues include aspartate 36, lysine 37, threonine 43, serine 44, methionine 50, glycine 307, and isoleucine 311. Positions 339–341 match the Microbody targeting signal motif; that stretch reads SKL.

The protein belongs to the DAMOX/DASOX family. In terms of assembly, homotetramer. Interacts with PEX5; the interaction is direct and required for localization of DDO to the peroxisome. Requires FAD as cofactor. In terms of tissue distribution, expressed in epithelial cells of the renal proximal tubules (not detected in the glomeruli or renal distal tubules), liver, right atrium of heart, lung, chief cells of the gastric mucosa, choroid plexus, pia mater, brain stem, midbrain, pons, medulla oblongata, hypothalamus, hippocampus, cerebral cortex, cerebellum, ependyma, olfactory bulb and the pituitary, pineal, thyroid and adrenal glands (at protein level).

Its subcellular location is the peroxisome matrix. The protein resides in the cytoplasm. It is found in the cytosol. The catalysed reaction is D-aspartate + O2 + H2O = oxaloacetate + H2O2 + NH4(+). It carries out the reaction D-glutamate + O2 + H2O = H2O2 + 2-oxoglutarate + NH4(+). In terms of biological role, selectively catalyzes the oxidative deamination of acidic amino acids. Suppresses the level of D-aspartate in the brain, an amino acid that can act as an agonist for glutamate receptors. Protects the organism from the toxicity of D-amino acids. May also function in the intestine. The polypeptide is D-aspartate oxidase (DDO) (Sus scrofa (Pig)).